Consider the following 498-residue polypeptide: Sulfate adenylyltransferase subunit 1 (498 aa).

A tr-type G domain is found at 30 to 246 (TRPLRLITCG…LELATTRSAQ (217 aa)). The G1 stretch occupies residues 39–46 (GSVDDGKS). Position 39–46 (39–46 (GSVDDGKS)) interacts with GTP. The interval 97 to 101 (GITID) is G2. The interval 118 to 121 (DTPG) is G3. Residues 118–122 (DTPGH) and 173–176 (NKID) each bind GTP. A G4 region spans residues 173 to 176 (NKID). Residues 210–212 (SAL) are G5.

Belongs to the TRAFAC class translation factor GTPase superfamily. Classic translation factor GTPase family. CysN/NodQ subfamily. Heterodimer composed of CysD, the smaller subunit, and CysN.

The catalysed reaction is sulfate + ATP + H(+) = adenosine 5'-phosphosulfate + diphosphate. It participates in sulfur metabolism; hydrogen sulfide biosynthesis; sulfite from sulfate: step 1/3. In terms of biological role, with CysD forms the ATP sulfurylase (ATPS) that catalyzes the adenylation of sulfate producing adenosine 5'-phosphosulfate (APS) and diphosphate, the first enzymatic step in sulfur assimilation pathway. APS synthesis involves the formation of a high-energy phosphoric-sulfuric acid anhydride bond driven by GTP hydrolysis by CysN coupled to ATP hydrolysis by CysD. In Rhizobium meliloti (strain 1021) (Ensifer meliloti), this protein is Sulfate adenylyltransferase subunit 1.